The following is a 93-amino-acid chain: Large ribosomal subunit protein bL27 (93 aa).

The propeptide occupies 1 to 10 (MLLKLQIQLF).

Belongs to the bacterial ribosomal protein bL27 family. Post-translationally, the N-terminus is cleaved by ribosomal processing cysteine protease Prp.

The sequence is that of Large ribosomal subunit protein bL27 from Phytoplasma australiense.